A 381-amino-acid chain; its full sequence is Queuine tRNA-ribosyltransferase (381 aa).

The active-site Proton acceptor is Asp92. Substrate contacts are provided by residues 92-96, Asp146, Gln190, and Gly217; that span reads DSGGF. The tract at residues 248 to 254 is RNA binding; that stretch reads GVGRPED. Asp267 serves as the catalytic Nucleophile. The tract at residues 272–276 is RNA binding; important for wobble base 34 recognition; the sequence is TRNAR. Residues Cys305, Cys307, Cys310, and His337 each contribute to the Zn(2+) site.

Belongs to the queuine tRNA-ribosyltransferase family. In terms of assembly, homodimer. Within each dimer, one monomer is responsible for RNA recognition and catalysis, while the other monomer binds to the replacement base PreQ1. Zn(2+) serves as cofactor.

The enzyme catalyses 7-aminomethyl-7-carbaguanine + guanosine(34) in tRNA = 7-aminomethyl-7-carbaguanosine(34) in tRNA + guanine. The protein operates within tRNA modification; tRNA-queuosine biosynthesis. Functionally, catalyzes the base-exchange of a guanine (G) residue with the queuine precursor 7-aminomethyl-7-deazaguanine (PreQ1) at position 34 (anticodon wobble position) in tRNAs with GU(N) anticodons (tRNA-Asp, -Asn, -His and -Tyr). Catalysis occurs through a double-displacement mechanism. The nucleophile active site attacks the C1' of nucleotide 34 to detach the guanine base from the RNA, forming a covalent enzyme-RNA intermediate. The proton acceptor active site deprotonates the incoming PreQ1, allowing a nucleophilic attack on the C1' of the ribose to form the product. After dissociation, two additional enzymatic reactions on the tRNA convert PreQ1 to queuine (Q), resulting in the hypermodified nucleoside queuosine (7-(((4,5-cis-dihydroxy-2-cyclopenten-1-yl)amino)methyl)-7-deazaguanosine). The sequence is that of Queuine tRNA-ribosyltransferase from Xanthomonas axonopodis pv. citri (strain 306).